Reading from the N-terminus, the 385-residue chain is DNA replication and repair protein RecF (385 aa).

ATP is bound at residue 30 to 37; it reads GPNGFGKT.

Belongs to the RecF family.

It localises to the cytoplasm. Functionally, the RecF protein is involved in DNA metabolism; it is required for DNA replication and normal SOS inducibility. RecF binds preferentially to single-stranded, linear DNA. It also seems to bind ATP. This is DNA replication and repair protein RecF from Mycobacterium marinum (strain ATCC BAA-535 / M).